The following is a 315-amino-acid chain: 4-diphosphocytidyl-2-C-methyl-D-erythritol kinase (315 aa).

Lysine 26 is a catalytic residue. An ATP-binding site is contributed by 111 to 121 (PLAGGLAGGSA). Aspartate 153 is a catalytic residue.

It belongs to the GHMP kinase family. IspE subfamily.

The enzyme catalyses 4-CDP-2-C-methyl-D-erythritol + ATP = 4-CDP-2-C-methyl-D-erythritol 2-phosphate + ADP + H(+). Its pathway is isoprenoid biosynthesis; isopentenyl diphosphate biosynthesis via DXP pathway; isopentenyl diphosphate from 1-deoxy-D-xylulose 5-phosphate: step 3/6. Catalyzes the phosphorylation of the position 2 hydroxy group of 4-diphosphocytidyl-2C-methyl-D-erythritol. The protein is 4-diphosphocytidyl-2-C-methyl-D-erythritol kinase of Salinispora tropica (strain ATCC BAA-916 / DSM 44818 / JCM 13857 / NBRC 105044 / CNB-440).